The chain runs to 615 residues: Nuclear cap-binding protein subunit 3 (615 aa).

Lys-12 is covalently cross-linked (Glycyl lysine isopeptide (Lys-Gly) (interchain with G-Cter in SUMO2)). Residues 15–27 (APAGPALGLPSPE) are compositionally biased toward low complexity. The tract at residues 15–43 (APAGPALGLPSPEVESGLERGEPEPMEVE) is disordered. Ser-25 carries the phosphoserine modification. Residue Lys-70 forms a Glycyl lysine isopeptide (Lys-Gly) (interchain with G-Cter in SUMO2) linkage. The residue at position 73 (Ser-73) is a Phosphoserine. An RNA recognition motif (RRM) domain region spans residues 126–187 (ETIYICGVDE…MSSLPAQDKM (62 aa)). A WLDD motif; essential for 7-methylguanosine-containing mRNA cap binding motif is present at residues 155–158 (WLDD). 2 disordered regions span residues 182–233 (PAQD…LDTL) and 332–400 (HSGL…MDYD). The segment covering 185–208 (DKMRSRDASEDKSSEKNKKDKQED) has biased composition (basic and acidic residues). Lys-186 participates in a covalent cross-link: Glycyl lysine isopeptide (Lys-Gly) (interchain with G-Cter in SUMO2). A phosphoserine mark is found at Ser-209 and Ser-210. Composition is skewed to acidic residues over residues 209–230 (SSDDDETEEGEVEDENSSDVEL) and 341–360 (EPIEEEEEEEEEEEDQDMDA). Residues 361–383 (DDRVVVEYHEELPGLKQPRERSL) show a composition bias toward basic and acidic residues. Thr-408 is subject to Phosphothreonine. Ser-410 is modified (phosphoserine). 2 disordered regions span residues 430–454 (SIRNPMRADSISTSNIKNRIGNKLP) and 467–615 (EKRQ…EAES). Positions 506-516 (VRREPSSDVHS) are enriched in basic and acidic residues. Residue Lys-536 forms a Glycyl lysine isopeptide (Lys-Gly) (interchain with G-Cter in SUMO2) linkage. Composition is skewed to basic and acidic residues over residues 549–564 (KTKEKNTKKVDHRASG) and 580–593 (IKEKEESRQKKSRL). Ser-563 bears the Phosphoserine mark. Residues 606 to 615 (ESSSGSEAES) are compositionally biased toward low complexity. Position 615 is a phosphoserine (Ser-615).

It belongs to the NCBP3 family. Component of an alternative cap-binding complex (CBC) composed of NCBP1/CBP80 and NCBP3. Interacts with SRRT, KPNA3, THOC5 and EIF4A3.

It is found in the nucleus. It localises to the cytoplasm. Its function is as follows. Associates with NCBP1/CBP80 to form an alternative cap-binding complex (CBC) which plays a key role in mRNA export. NCBP3 serves as adapter protein linking the capped RNAs (m7GpppG-capped RNA) to NCBP1/CBP80. Unlike the conventional CBC with NCBP2 which binds both small nuclear RNA (snRNA) and messenger (mRNA) and is involved in their export from the nucleus, the alternative CBC with NCBP3 does not bind snRNA and associates only with mRNA thereby playing a role in only mRNA export. The alternative CBC is particularly important in cellular stress situations such as virus infections and the NCBP3 activity is critical to inhibit virus growth. The chain is Nuclear cap-binding protein subunit 3 from Mus musculus (Mouse).